Here is a 361-residue protein sequence, read N- to C-terminus: Phospho-N-acetylmuramoyl-pentapeptide-transferase (361 aa).

A run of 10 helical transmembrane segments spans residues 28–48 (LAILTSFFFTFIIAPPCIRWL), 73–93 (TMGGIIITASVLVAVLMWGNL), 98–118 (MWIMIISFLGFGLIGFIDDYL), 132–152 (YKLFAQLLLASSVTLFLYFNP), 168–188 (WLIDLGIFYLPFAIFVIVGSS), 199–219 (GLAAGLVGIASIVNAVLLYIS), 235–255 (GTGELAVFCGAMLGACLGFLW), 263–283 (VFMGDVGSLSLGGALGSLAVI), 288–308 (IVLALVGGIFVVEALSVILQV), and 338–358 (KVIVRFWIIGIILALLSLLTL).

It belongs to the glycosyltransferase 4 family. MraY subfamily. The cofactor is Mg(2+).

It is found in the cell inner membrane. The catalysed reaction is UDP-N-acetyl-alpha-D-muramoyl-L-alanyl-gamma-D-glutamyl-meso-2,6-diaminopimeloyl-D-alanyl-D-alanine + di-trans,octa-cis-undecaprenyl phosphate = di-trans,octa-cis-undecaprenyl diphospho-N-acetyl-alpha-D-muramoyl-L-alanyl-D-glutamyl-meso-2,6-diaminopimeloyl-D-alanyl-D-alanine + UMP. It participates in cell wall biogenesis; peptidoglycan biosynthesis. Catalyzes the initial step of the lipid cycle reactions in the biosynthesis of the cell wall peptidoglycan: transfers peptidoglycan precursor phospho-MurNAc-pentapeptide from UDP-MurNAc-pentapeptide onto the lipid carrier undecaprenyl phosphate, yielding undecaprenyl-pyrophosphoryl-MurNAc-pentapeptide, known as lipid I. The sequence is that of Phospho-N-acetylmuramoyl-pentapeptide-transferase from Thermodesulfovibrio yellowstonii (strain ATCC 51303 / DSM 11347 / YP87).